The primary structure comprises 288 residues: Energy-coupling factor transporter ATP-binding protein EcfA2 (288 aa).

Residues 3 to 246 (ITFDHVSFTY…PAWLKANQLG (244 aa)) form the ABC transporter domain. ATP is bound at residue 40–47 (GHTGSGKS). E171 functions as the Proton acceptor in the catalytic mechanism.

The protein belongs to the ABC transporter superfamily. Energy-coupling factor EcfA family. In terms of assembly, forms a stable energy-coupling factor (ECF) transporter complex probably composed of 2 membrane-embedded substrate-binding proteins (S component), 2 ATP-binding proteins (A component) and 2 transmembrane proteins (T component). This complex interacts with a number of substrate-specific components, including FolT and ThiT for 5-formyltetrahydrofolate and thiamine respectively.

Its subcellular location is the cell membrane. In terms of biological role, ATP-binding (A) component of a common energy-coupling factor (ECF) ABC-transporter complex. Unlike classic ABC transporters this ECF transporter provides the energy necessary to transport a number of different substrates including 5-formyltetrahydrofolate and thiamine. Expression of the complex plus FolT or ThiT in Lactococcus lactis subsp. cremoris (strain NZ9000) allows 5-formyltetrahydrofolate or thiamine uptake respectively; 5-formyltetrahydrofolate or thiamine are not taken up in the absence of FolT/ThiT or the EcfA1A2T complex. Deenergized L.lactis subsp. cremoris (treated with 2-deoxyglucose) do not take up substrate. In Lacticaseibacillus paracasei (strain ATCC 334 / BCRC 17002 / CCUG 31169 / CIP 107868 / KCTC 3260 / NRRL B-441) (Lactobacillus paracasei), this protein is Energy-coupling factor transporter ATP-binding protein EcfA2.